A 199-amino-acid chain; its full sequence is Large ribosomal subunit protein bL25 (199 aa).

Belongs to the bacterial ribosomal protein bL25 family. CTC subfamily. As to quaternary structure, part of the 50S ribosomal subunit; part of the 5S rRNA/L5/L18/L25 subcomplex. Contacts the 5S rRNA. Binds to the 5S rRNA independently of L5 and L18.

Its function is as follows. This is one of the proteins that binds to the 5S RNA in the ribosome where it forms part of the central protuberance. This chain is Large ribosomal subunit protein bL25, found in Chlorobaculum tepidum (strain ATCC 49652 / DSM 12025 / NBRC 103806 / TLS) (Chlorobium tepidum).